The sequence spans 448 residues: JmjC domain-containing protein D (448 aa).

In terms of domain architecture, JmjC spans 305-448 (EQIPQLRNDI…SLSQSFSIFP (144 aa)).

In Dictyostelium discoideum (Social amoeba), this protein is JmjC domain-containing protein D (jcdD).